A 177-amino-acid chain; its full sequence is Large ribosomal subunit protein uL6 (177 aa).

The protein belongs to the universal ribosomal protein uL6 family. In terms of assembly, part of the 50S ribosomal subunit.

This protein binds to the 23S rRNA, and is important in its secondary structure. It is located near the subunit interface in the base of the L7/L12 stalk, and near the tRNA binding site of the peptidyltransferase center. In Polynucleobacter asymbioticus (strain DSM 18221 / CIP 109841 / QLW-P1DMWA-1) (Polynucleobacter necessarius subsp. asymbioticus), this protein is Large ribosomal subunit protein uL6.